The chain runs to 335 residues: Holliday junction branch migration complex subunit RuvB (335 aa).

Residues 1–183 form a large ATPase domain (RuvB-L) region; the sequence is MDERIISSET…FGVIDHLEFY (183 aa). ATP contacts are provided by residues leucine 22, arginine 23, glycine 64, lysine 67, threonine 68, threonine 69, 130–132, arginine 173, tyrosine 183, and arginine 220; that span reads EDY. Threonine 68 is a Mg(2+) binding site. Residues 184 to 254 form a small ATPAse domain (RuvB-S) region; it reads TEEQLTEIVL…LAKEALTLLQ (71 aa). Residues 257–335 are head domain (RuvB-H); sequence PRGLDTIDQK…HLGISYEKEV (79 aa). The DNA site is built by arginine 293, arginine 312, and arginine 317.

Belongs to the RuvB family. In terms of assembly, homohexamer. Forms an RuvA(8)-RuvB(12)-Holliday junction (HJ) complex. HJ DNA is sandwiched between 2 RuvA tetramers; dsDNA enters through RuvA and exits via RuvB. An RuvB hexamer assembles on each DNA strand where it exits the tetramer. Each RuvB hexamer is contacted by two RuvA subunits (via domain III) on 2 adjacent RuvB subunits; this complex drives branch migration. In the full resolvosome a probable DNA-RuvA(4)-RuvB(12)-RuvC(2) complex forms which resolves the HJ.

It localises to the cytoplasm. The catalysed reaction is ATP + H2O = ADP + phosphate + H(+). Its function is as follows. The RuvA-RuvB-RuvC complex processes Holliday junction (HJ) DNA during genetic recombination and DNA repair, while the RuvA-RuvB complex plays an important role in the rescue of blocked DNA replication forks via replication fork reversal (RFR). RuvA specifically binds to HJ cruciform DNA, conferring on it an open structure. The RuvB hexamer acts as an ATP-dependent pump, pulling dsDNA into and through the RuvAB complex. RuvB forms 2 homohexamers on either side of HJ DNA bound by 1 or 2 RuvA tetramers; 4 subunits per hexamer contact DNA at a time. Coordinated motions by a converter formed by DNA-disengaged RuvB subunits stimulates ATP hydrolysis and nucleotide exchange. Immobilization of the converter enables RuvB to convert the ATP-contained energy into a lever motion, pulling 2 nucleotides of DNA out of the RuvA tetramer per ATP hydrolyzed, thus driving DNA branch migration. The RuvB motors rotate together with the DNA substrate, which together with the progressing nucleotide cycle form the mechanistic basis for DNA recombination by continuous HJ branch migration. Branch migration allows RuvC to scan DNA until it finds its consensus sequence, where it cleaves and resolves cruciform DNA. The protein is Holliday junction branch migration complex subunit RuvB of Listeria innocua serovar 6a (strain ATCC BAA-680 / CLIP 11262).